We begin with the raw amino-acid sequence, 173 residues long: NADH-ubiquinone oxidoreductase chain 6 (173 aa).

5 helical membrane-spanning segments follow: residues 1–21, 27–47, 48–68, 87–107, and 139–159; these read MTYFVLFLGLCFVLGGLAVAS, YGVVGLVLASVAGCGWLLSLG, VSFVSLVLFMVYLGGMLVVFV, VVGYGVGFVVVLVVGLVVGGF, and CGVGMFLVAGWGLLLTLFVVL.

The protein belongs to the complex I subunit 6 family.

Its subcellular location is the mitochondrion membrane. It catalyses the reaction a ubiquinone + NADH + 5 H(+)(in) = a ubiquinol + NAD(+) + 4 H(+)(out). In terms of biological role, core subunit of the mitochondrial membrane respiratory chain NADH dehydrogenase (Complex I) that is believed to belong to the minimal assembly required for catalysis. Complex I functions in the transfer of electrons from NADH to the respiratory chain. The immediate electron acceptor for the enzyme is believed to be ubiquinone. The chain is NADH-ubiquinone oxidoreductase chain 6 (MT-ND6) from Aethia pygmaea (Whiskered auklet).